Here is a 156-residue protein sequence, read N- to C-terminus: Small ribosomal subunit protein uS7 (156 aa).

It belongs to the universal ribosomal protein uS7 family. In terms of assembly, part of the 30S ribosomal subunit. Contacts proteins S9 and S11.

In terms of biological role, one of the primary rRNA binding proteins, it binds directly to 16S rRNA where it nucleates assembly of the head domain of the 30S subunit. Is located at the subunit interface close to the decoding center, probably blocks exit of the E-site tRNA. This chain is Small ribosomal subunit protein uS7, found in Synechococcus sp. (strain CC9605).